The following is a 636-amino-acid chain: 1-deoxy-D-xylulose-5-phosphate synthase 2 (636 aa).

Thiamine diphosphate contacts are provided by residues H78 and 119–121 (AHS). A Mg(2+)-binding site is contributed by D150. Thiamine diphosphate-binding positions include 151-152 (GS), N179, Y288, and E370. N179 is a Mg(2+) binding site.

This sequence belongs to the transketolase family. DXPS subfamily. As to quaternary structure, homodimer. It depends on Mg(2+) as a cofactor. Thiamine diphosphate serves as cofactor.

It catalyses the reaction D-glyceraldehyde 3-phosphate + pyruvate + H(+) = 1-deoxy-D-xylulose 5-phosphate + CO2. It functions in the pathway metabolic intermediate biosynthesis; 1-deoxy-D-xylulose 5-phosphate biosynthesis; 1-deoxy-D-xylulose 5-phosphate from D-glyceraldehyde 3-phosphate and pyruvate: step 1/1. Its function is as follows. Catalyzes the acyloin condensation reaction between C atoms 2 and 3 of pyruvate and glyceraldehyde 3-phosphate to yield 1-deoxy-D-xylulose-5-phosphate (DXP). This Jannaschia sp. (strain CCS1) protein is 1-deoxy-D-xylulose-5-phosphate synthase 2.